Consider the following 420-residue polypeptide: Ribosome biogenesis protein WDR12 homolog (420 aa).

The interval 10–92 is ubiquitin-like (UBL) domain; sequence VQVHLKTKQE…EDAIEIEYVE (83 aa). WD repeat units follow at residues 104-142, 143-185, 192-231, 250-288, 290-329, 335-375, and 379-417; these read LHDD…LTIS, GHTA…NSVE, GHER…AAEG, GHRE…IKTE, STNK…GSVV, GHNA…APLY, and GHGE…AEDT.

The protein belongs to the WD repeat WDR12/YTM1 family.

The protein localises to the nucleus. It is found in the nucleolus. The protein resides in the nucleoplasm. In terms of biological role, required for maturation of ribosomal RNAs and formation of the large ribosomal subunit. This chain is Ribosome biogenesis protein WDR12 homolog, found in Drosophila erecta (Fruit fly).